We begin with the raw amino-acid sequence, 367 residues long: Aflatoxin B1 aldehyde reductase member 2 (367 aa).

Residues 1–46 constitute a mitochondrion transit peptide; that stretch reads MLRAVSRAVSRAAVRCAWRSGPSVARPLAMSRSPAPRAVSGAPLRP. A disordered region spans residues 27-46; that stretch reads PLAMSRSPAPRAVSGAPLRP. S40 carries the phosphoserine modification. Position 48 is a phosphothreonine (T48). D80 contributes to the NADP(+) binding site. The Proton donor role is filled by Y85. An N6-acetyllysine modification is found at K136. Substrate is bound at residue H149. Residues 179–180, Q205, 234–244, and R258 each bind NADP(+); these read SN and NPLAGGLLTGK. K244 bears the N6-succinyllysine mark. Phosphoserine is present on S263. 2 residues coordinate substrate: Y268 and R271. Residue 326-334 coordinates NADP(+); it reads SSLEQLEQN. Residue R367 participates in substrate binding.

Belongs to the aldo/keto reductase family. Aldo/keto reductase 2 subfamily. Homodimer. Heterodimer with AKR7A1.

It is found in the mitochondrion. The protein localises to the golgi apparatus. It localises to the golgi stack. Its subcellular location is the cytoplasm. The enzyme catalyses 4-hydroxybutanoate + NADP(+) = succinate semialdehyde + NADPH + H(+). Its function is as follows. Catalyzes the NADPH-dependent reduction of succinic semialdehyde to gamma-hydroxybutyrate. May have an important role in producing the neuromodulator gamma-hydroxybutyrate (GHB). Has broad substrate specificity. Can reduce the dialdehyde protein-binding form of aflatoxin B1 (AFB1) to the non-binding AFB1 dialcohol. Acts as a 2-carboxybenzaldehyde reductase. The sequence is that of Aflatoxin B1 aldehyde reductase member 2 (Akr7a2) from Rattus norvegicus (Rat).